The chain runs to 249 residues: Exosome complex component Rrp4 (249 aa).

One can recognise an S1 motif domain in the interval 72–143 (GDTIIGLVED…RTISPVLTVK (72 aa)). Residues 151–213 (PLGTVMDIMP…EALIEAINII (63 aa)) form the KH domain.

Belongs to the RRP4 family. As to quaternary structure, component of the archaeal exosome complex. Forms a trimer of Rrp4 and/or Csl4 subunits. The trimer associates with a hexameric ring-like arrangement composed of 3 Rrp41-Rrp42 heterodimers.

It is found in the cytoplasm. Functionally, non-catalytic component of the exosome, which is a complex involved in RNA degradation. Increases the RNA binding and the efficiency of RNA degradation. Confers strong poly(A) specificity to the exosome. The chain is Exosome complex component Rrp4 from Sulfolobus acidocaldarius (strain ATCC 33909 / DSM 639 / JCM 8929 / NBRC 15157 / NCIMB 11770).